The chain runs to 405 residues: 4-hydroxy-3-methylbut-2-enyl diphosphate reductase (405 aa).

Residue Cys66 participates in [4Fe-4S] cluster binding. His96 is a (2E)-4-hydroxy-3-methylbut-2-enyl diphosphate binding site. Residue His96 participates in dimethylallyl diphosphate binding. His96 is a binding site for isopentenyl diphosphate. Residue Cys158 participates in [4Fe-4S] cluster binding. Residue His186 participates in (2E)-4-hydroxy-3-methylbut-2-enyl diphosphate binding. His186 lines the dimethylallyl diphosphate pocket. His186 serves as a coordination point for isopentenyl diphosphate. Glu188 (proton donor) is an active-site residue. Position 251 (Thr251) interacts with (2E)-4-hydroxy-3-methylbut-2-enyl diphosphate. Cys289 lines the [4Fe-4S] cluster pocket. Ser318, Ser319, Asn320, and Ser380 together coordinate (2E)-4-hydroxy-3-methylbut-2-enyl diphosphate. Residues Ser318, Ser319, Asn320, and Ser380 each contribute to the dimethylallyl diphosphate site. Residues Ser318, Ser319, Asn320, and Ser380 each coordinate isopentenyl diphosphate.

Belongs to the IspH family. The cofactor is [4Fe-4S] cluster.

It catalyses the reaction isopentenyl diphosphate + 2 oxidized [2Fe-2S]-[ferredoxin] + H2O = (2E)-4-hydroxy-3-methylbut-2-enyl diphosphate + 2 reduced [2Fe-2S]-[ferredoxin] + 2 H(+). The enzyme catalyses dimethylallyl diphosphate + 2 oxidized [2Fe-2S]-[ferredoxin] + H2O = (2E)-4-hydroxy-3-methylbut-2-enyl diphosphate + 2 reduced [2Fe-2S]-[ferredoxin] + 2 H(+). It participates in isoprenoid biosynthesis; dimethylallyl diphosphate biosynthesis; dimethylallyl diphosphate from (2E)-4-hydroxy-3-methylbutenyl diphosphate: step 1/1. It functions in the pathway isoprenoid biosynthesis; isopentenyl diphosphate biosynthesis via DXP pathway; isopentenyl diphosphate from 1-deoxy-D-xylulose 5-phosphate: step 6/6. Its function is as follows. Catalyzes the conversion of 1-hydroxy-2-methyl-2-(E)-butenyl 4-diphosphate (HMBPP) into a mixture of isopentenyl diphosphate (IPP) and dimethylallyl diphosphate (DMAPP). Acts in the terminal step of the DOXP/MEP pathway for isoprenoid precursor biosynthesis. The protein is 4-hydroxy-3-methylbut-2-enyl diphosphate reductase of Cyanothece sp. (strain PCC 7425 / ATCC 29141).